A 745-amino-acid chain; its full sequence is uncharacterized protein (745 aa).

Residues 158–256 (NQVCDYIELH…HQTPKQYRGD (99 aa)) form the HTH araC/xylS-type domain. 2 DNA-binding regions (H-T-H motif) span residues 175 to 196 (SELS…TESL) and 223 to 246 (ITDI…KHFT).

This is an uncharacterized protein from Staphylococcus aureus (strain COL).